The primary structure comprises 353 residues: Photosystem II D2 protein (353 aa).

Thr2 is subject to N-acetylthreonine. A Phosphothreonine modification is found at Thr2. The chain crosses the membrane as a helical span at residues 41–61 (CAYFALGGWFTGTTFVTSWYT). Residue His118 coordinates chlorophyll a. The chain crosses the membrane as a helical span at residues 125–141 (GFMLRQFELARSVQLRP). Residues Gln130 and Asn143 each coordinate pheophytin a. Residues 153 to 166 (VFVSVFLIYPLGQS) form a helical membrane-spanning segment. His198 is a chlorophyll a binding site. A helical transmembrane segment spans residues 208–228 (AALLCAIHGATVENTLFEDGD). Residues His215 and Phe262 each contribute to the a plastoquinone site. His215 lines the Fe cation pocket. His269 contacts Fe cation. Residues 279-295 (GLWMSAIGVVGLALNLR) form a helical membrane-spanning segment.

Belongs to the reaction center PufL/M/PsbA/D family. In terms of assembly, PSII is composed of 1 copy each of membrane proteins PsbA, PsbB, PsbC, PsbD, PsbE, PsbF, PsbH, PsbI, PsbJ, PsbK, PsbL, PsbM, PsbT, PsbX, PsbY, PsbZ, Psb30/Ycf12, at least 3 peripheral proteins of the oxygen-evolving complex and a large number of cofactors. It forms dimeric complexes. The D1/D2 heterodimer binds P680, chlorophylls that are the primary electron donor of PSII, and subsequent electron acceptors. It shares a non-heme iron and each subunit binds pheophytin, quinone, additional chlorophylls, carotenoids and lipids. There is also a Cl(-1) ion associated with D1 and D2, which is required for oxygen evolution. The PSII complex binds additional chlorophylls, carotenoids and specific lipids. is required as a cofactor.

It is found in the plastid. The protein resides in the chloroplast thylakoid membrane. The catalysed reaction is 2 a plastoquinone + 4 hnu + 2 H2O = 2 a plastoquinol + O2. Functionally, photosystem II (PSII) is a light-driven water:plastoquinone oxidoreductase that uses light energy to abstract electrons from H(2)O, generating O(2) and a proton gradient subsequently used for ATP formation. It consists of a core antenna complex that captures photons, and an electron transfer chain that converts photonic excitation into a charge separation. The D1/D2 (PsbA/PsbD) reaction center heterodimer binds P680, the primary electron donor of PSII as well as several subsequent electron acceptors. D2 is needed for assembly of a stable PSII complex. The sequence is that of Photosystem II D2 protein from Agrostis stolonifera (Creeping bentgrass).